The sequence spans 141 residues: Relaxin-3 (141 aa).

The N-terminal stretch at M1–A24 is a signal peptide. 3 disulfides stabilise this stretch: C34-C128, C46-C141, and C127-C132. The propeptide at A54–R117 is connecting peptide.

Belongs to the insulin family. As to quaternary structure, heterodimer of a B chain and an A chain linked by two disulfide bonds. High expression in the brain localized to the pons/medulla with highest levels in pars ventromedialis of the dorsal tegmental nucleus. Significant expression is also detected in the spleen, thymus, lung, testis and ovary.

The protein resides in the secreted. Its function is as follows. May play a role in neuropeptide signaling processes. Ligand for LGR7, relaxin-3 receptor-1 and relaxin-3 receptor-2. The polypeptide is Relaxin-3 (Rln3) (Mus musculus (Mouse)).